The following is a 462-amino-acid chain: Glycine--tRNA ligase (462 aa).

Substrate-binding residues include Arg94 and Glu143. Residues 175-177 (RNE), 185-190 (FRTCEF), 259-260 (EL), and 308-311 (GLTR) contribute to the ATP site. A substrate-binding site is contributed by 190 to 194 (FEQME). Substrate is bound at residue 304–308 (ETSAG).

Belongs to the class-II aminoacyl-tRNA synthetase family. In terms of assembly, homodimer.

The protein localises to the cytoplasm. It catalyses the reaction tRNA(Gly) + glycine + ATP = glycyl-tRNA(Gly) + AMP + diphosphate. Functionally, catalyzes the attachment of glycine to tRNA(Gly). This Treponema pallidum (strain Nichols) protein is Glycine--tRNA ligase.